The chain runs to 199 residues: MIGCLIGEVFALEAPTVLLNVNGVGYEIDTPLSTFCQLQKGQKVTLWTHLVIREDAQQLYGFSDAQEKTIFRTLLKVNGVGPKMALGILSTLSVELLVHTIEHDDVNTLVKVPGVGKKTAERLMIELRDRFKTLAQGTSSAAALPQIQFVSNSPVAEAEAALQSLGYKPLEAQKAVAAVKADYTESADIIRAALKSMMK.

Residues 1 to 63 are domain I; that stretch reads MIGCLIGEVF…EDAQQLYGFS (63 aa). The tract at residues 64–142 is domain II; the sequence is DAQEKTIFRT…TLAQGTSSAA (79 aa). The tract at residues 143–150 is flexible linker; that stretch reads ALPQIQFV. Residues 150–199 form a domain III region; it reads VSNSPVAEAEAALQSLGYKPLEAQKAVAAVKADYTESADIIRAALKSMMK.

The protein belongs to the RuvA family. In terms of assembly, homotetramer. Forms an RuvA(8)-RuvB(12)-Holliday junction (HJ) complex. HJ DNA is sandwiched between 2 RuvA tetramers; dsDNA enters through RuvA and exits via RuvB. An RuvB hexamer assembles on each DNA strand where it exits the tetramer. Each RuvB hexamer is contacted by two RuvA subunits (via domain III) on 2 adjacent RuvB subunits; this complex drives branch migration. In the full resolvosome a probable DNA-RuvA(4)-RuvB(12)-RuvC(2) complex forms which resolves the HJ.

It is found in the cytoplasm. Its function is as follows. The RuvA-RuvB-RuvC complex processes Holliday junction (HJ) DNA during genetic recombination and DNA repair, while the RuvA-RuvB complex plays an important role in the rescue of blocked DNA replication forks via replication fork reversal (RFR). RuvA specifically binds to HJ cruciform DNA, conferring on it an open structure. The RuvB hexamer acts as an ATP-dependent pump, pulling dsDNA into and through the RuvAB complex. HJ branch migration allows RuvC to scan DNA until it finds its consensus sequence, where it cleaves and resolves the cruciform DNA. In Acinetobacter baumannii (strain SDF), this protein is Holliday junction branch migration complex subunit RuvA.